The chain runs to 331 residues: 3-dehydrosphinganine reductase TSC10B (331 aa).

Over 1-7 (MAAIFSL) the chain is Lumenal. Residues 8-28 (FLFFILFIVSLLIILSFIVRP) form a helical membrane-spanning segment. The Cytoplasmic segment spans residues 29-262 (RSVTIPIKFR…ICFDGIKAGK (234 aa)). 7 residues coordinate NADPH: Gly44, Ser46, Ser47, Gly48, Arg69, Lys73, and Asp95. Residues 44–48 (GGSSG) carry the GXSXG motif. Ser172 serves as the catalytic Proton donor. Residue Tyr186 is the Proton acceptor of the active site. 2 residues coordinate NADP(+): Tyr186 and Lys190. Lys190 acts as the Lowers pKa of active site Tyr in catalysis. Residues 263 to 283 (FTVTCHFIGFLLSIASTGMSP) traverse the membrane as a helical segment. The Lumenal segment spans residues 284–286 (QGS). The chain crosses the membrane as a helical span at residues 287-307 (FWLALTEVMFGGLIRLASLVF). Topologically, residues 308-331 (QWQWYKTIEKWSQRNKKEVNSKLA) are cytoplasmic.

It belongs to the short-chain dehydrogenases/reductases (SDR) family. In terms of tissue distribution, expressed in roots, leaves, stems and flowers.

Its subcellular location is the endoplasmic reticulum membrane. It carries out the reaction sphinganine + NADP(+) = 3-oxosphinganine + NADPH + H(+). The protein operates within lipid metabolism; sphingolipid metabolism. Its function is as follows. Catalyzes the reduction of 3'-oxosphinganine (3-ketodihydrosphingosine/KDS) to sphinganine (dihydrosphingosine/DHS), the second step of de novo sphingolipid biosynthesis. In plants, sphingolipids seems to play a critical role in mineral ion homeostasis, most likely through their involvement in the ion transport functionalities of membrane systems in the root. Is stereospecific for D-erythro-DHS production and does not produce L-threo-DHS. The polypeptide is 3-dehydrosphinganine reductase TSC10B (TSC10B) (Arabidopsis thaliana (Mouse-ear cress)).